A 336-amino-acid chain; its full sequence is MSTTQGGSNQQDETRRELIIQKFKLFRREGNNLEFVDQSGQKLRCPICGNTVFIEDAERGQIVCASCGYVLMEHILDTGPEWRAFTPEEKEDRARTGGPLERVTSEELVTRIETTLKSPDLKKKLEILKYKKWQQRIRVQTSYERNLVQATHELNRIAHQLGVPKSCMDEALAVYKQVLKSGLVKGRSVEAIIAACLHMACRMQGMPRSLDEISQYTRAPRKEIARCFRLIARELRIRLPLSDPRQYVPKIVEQLKLPGDIAKEAIRVLEEAKDKGLTAGKDPAGLAAAAVYIASLLKGEVRTQKEIAQAAQVTEVTVRNRYKELAKELNIKIPIK.

The TFIIB-type zinc finger occupies 41-72 (QKLRCPICGNTVFIEDAERGQIVCASCGYVLM). The Zn(2+) site is built by cysteine 45, cysteine 48, cysteine 64, and cysteine 67. Tandem repeats lie at residues 152 to 235 (HELN…AREL) and 246 to 327 (QYVP…ELAK).

Belongs to the TFIIB family.

Its function is as follows. Stabilizes TBP binding to an archaeal box-A promoter. Also responsible for recruiting RNA polymerase II to the pre-initiation complex (DNA-TBP-TFIIB). The sequence is that of Transcription initiation factor IIB from Caldivirga maquilingensis (strain ATCC 700844 / DSM 13496 / JCM 10307 / IC-167).